Here is a 267-residue protein sequence, read N- to C-terminus: Soluble interferon gamma receptor OPG193 (267 aa).

The N-terminal stretch at 1–17 (MRYIIILAVLFINSIHA) is a signal peptide. Asn42 and Asn150 each carry an N-linked (GlcNAc...) asparagine; by host glycan.

Belongs to the type II cytokine receptor family. As to quaternary structure, homodimer. Interacts with host IFNG.

Its subcellular location is the secreted. In terms of biological role, counteracts the antiviral effects of host IFN-gamma. Acts as a soluble IFN-gamma receptor and thus inhibits the interaction between host IFN-gamma and its receptor. In Cynomys gunnisoni (Gunnison's prairie dog), this protein is Soluble interferon gamma receptor OPG193 (OPG193).